The chain runs to 399 residues: MNHLLKQAKRVASECECGHEHQWIEMDELQLGRNAINYLPEYLHEKGLLHVTIVADANTYAVAGQLVAQLLKGRGIDVENCILKEQGALTLLADEHGLGQLVIGAAKETDVFLAVGAGTIHDLTRIASYKFGKPFIAIPTAPSVDGFTSMGAPVIRDGVKITFQTQAPIALFADLDFLTQAPRSMVAAGFGDMLGKSTSLVDWQVSHMLNDEPFCPAVFHMTKSALTMCMEHADEIAACNEQGIRLLTEALIMSGLAMLIFGHSHPASGAEHHLSHYWEMAFLRSGGTQPLHGAKVGYATMLISALYKNEARKKIETFQGEGSPLVNSIHKHRERLLMLIDTIPESSDIQRLLESVGGAVKSADLALADSLEDEALEKAHKLRERCTLLYCLNEHLKTS.

Residues aspartate 56, 118-122, and 140-143 each bind NAD(+); these read GTIHD and TAPS. Aspartate 145 provides a ligand contact to substrate. Position 149 (serine 149) interacts with NAD(+). Substrate is bound at residue aspartate 192. Ni(2+)-binding residues include aspartate 192 and histidine 272. Histidine 276 is a binding site for substrate. Histidine 292 lines the Ni(2+) pocket.

The protein belongs to the glycerol-1-phosphate dehydrogenase family. Homodimer. Ni(2+) is required as a cofactor.

It is found in the cytoplasm. It carries out the reaction sn-glycerol 1-phosphate + NAD(+) = dihydroxyacetone phosphate + NADH + H(+). It catalyses the reaction sn-glycerol 1-phosphate + NADP(+) = dihydroxyacetone phosphate + NADPH + H(+). Catalyzes the NAD(P)H-dependent reduction of dihydroxyacetonephosphate (DHAP or glycerone phosphate) to glycerol 1-phosphate (G1P). The G1P thus generated is probably used for the synthesis of phosphoglycerolipids in Gram-positive bacterial species. The polypeptide is Glycerol-1-phosphate dehydrogenase [NAD(P)+] (Halalkalibacterium halodurans (strain ATCC BAA-125 / DSM 18197 / FERM 7344 / JCM 9153 / C-125) (Bacillus halodurans)).